The primary structure comprises 538 residues: Atos homolog protein B (538 aa).

Disordered regions lie at residues 1-103 (MRHV…GLVS), 130-149 (GSAT…PSSN), 163-185 (PDQG…QLHT), and 199-272 (KSPV…LGCP). Low complexity predominate over residues 130–148 (GSATSSWTSGTQSTPWPSS). Residues 227-238 (HTPPGPGPPGPC) are compositionally biased toward pro residues. S254 and S255 each carry phosphoserine. Positions 348–430 (LLGNFEESLL…VPKVGTIQVT (83 aa)) are required for macropage invasion. Positions 436–444 (QTVVKMFLV) are transactivation domain 1 (TAD1).

It belongs to the ATOS family.

It is found in the nucleus. Its function is as follows. Transcription regulator that may syncronize transcriptional and translational programs. The chain is Atos homolog protein B from Rattus norvegicus (Rat).